An 81-amino-acid chain; its full sequence is Photosystem I iron-sulfur center (81 aa).

4Fe-4S ferredoxin-type domains lie at 2-31 (AHSV…MVPW) and 39-68 (IASA…VRVY). C11, C14, C17, C21, C48, C51, C54, and C58 together coordinate [4Fe-4S] cluster.

The eukaryotic PSI reaction center is composed of at least 11 subunits. [4Fe-4S] cluster serves as cofactor.

It localises to the plastid. The protein localises to the chloroplast thylakoid membrane. It carries out the reaction reduced [plastocyanin] + hnu + oxidized [2Fe-2S]-[ferredoxin] = oxidized [plastocyanin] + reduced [2Fe-2S]-[ferredoxin]. In terms of biological role, apoprotein for the two 4Fe-4S centers FA and FB of photosystem I (PSI); essential for photochemical activity. FB is the terminal electron acceptor of PSI, donating electrons to ferredoxin. The C-terminus interacts with PsaA/B/D and helps assemble the protein into the PSI complex. Required for binding of PsaD and PsaE to PSI. PSI is a plastocyanin-ferredoxin oxidoreductase, converting photonic excitation into a charge separation, which transfers an electron from the donor P700 chlorophyll pair to the spectroscopically characterized acceptors A0, A1, FX, FA and FB in turn. The chain is Photosystem I iron-sulfur center from Mesostigma viride (Green alga).